The following is a 1961-amino-acid chain: Myosin-9 (1961 aa).

Ala-2 carries the post-translational modification N-acetylalanine. The segment at 2–838 (AQQAADKYLY…RLFTKVKPLL (837 aa)) is mediates interaction with LIMCH1. The residue at position 8 (Lys-8) is an N6-acetyllysine. Tyr-11 bears the Phosphotyrosine mark. The region spanning 27–77 (GAKKLVWVPSTKNGFEPASLKEEVGEEAIVELVENGKKVKVNKDDIQKMNP) is the Myosin N-terminal SH3-like domain. The Myosin motor domain maps to 81 to 776 (SKVEDMAELT…VLAHLEEERD (696 aa)). An N6-acetyllysine modification is found at Lys-102. Residue 174–181 (GESGAGKT) participates in ATP binding. Residues Lys-299, Lys-435, and Lys-613 each carry the N6-acetyllysine modification. Ser-628 carries the post-translational modification Phosphoserine. Residues 654 to 676 (LAKLMATLRNTNPNFVCCIIPNH) form an actin-binding region. Phosphotyrosine is present on Tyr-754. The IQ domain maps to 779 to 808 (ITDVIIGFQACCRGYLARKAFAKRQQQLTA). Positions 841–1927 (IRHEDELLAK…LKNKLRRGDM (1087 aa)) form a coiled coil. The residue at position 850 (Lys-850) is an N6-succinyllysine. An N6-acetyllysine mark is found at Lys-860, Lys-975, and Lys-1024. Over residues 1035–1055 (RLRREEKQRQELEKTRRKLEG) the composition is skewed to basic and acidic residues. The tract at residues 1035 to 1057 (RLRREEKQRQELEKTRRKLEGDS) is disordered. Residue Ser-1114 is modified to Phosphoserine. 2 positions are modified to N6-acetyllysine: Lys-1234 and Lys-1249. The tract at residues 1331–1353 (LKQMEDEKNSFREQLEEEEEEAK) is disordered. Residues 1332 to 1344 (KQMEDEKNSFREQ) show a composition bias toward basic and acidic residues. An N6-acetyllysine mark is found at Lys-1358, Lys-1393, Lys-1405, Lys-1411, Lys-1460, and Lys-1639. At Lys-1670 the chain carries N6-succinyllysine. Position 1715 is a phosphoserine (Ser-1715). Residues Lys-1794, Lys-1803, and Lys-1846 each carry the N6-acetyllysine modification. Residues 1878–1910 (RQLEEAEEEAQRANASRRKLQRELEDATETADA) form a disordered region. Arg-1924 is modified (omega-N-methylarginine). Residues 1938–1961 (KGTGDCSDEEVDGKADGADAKATE) are disordered. A Phosphoserine modification is found at Ser-1944. Positions 1949–1961 (DGKADGADAKATE) are enriched in basic and acidic residues.

This sequence belongs to the TRAFAC class myosin-kinesin ATPase superfamily. Myosin family. As to quaternary structure, myosin is a hexameric protein that consists of 2 heavy chain subunits (MHC), 2 alkali light chain subunits (MLC) and 2 regulatory light chain subunits (MLC-2). Interacts with RASIP1. Interacts with DDR1. Interacts with PDLIM2. Interacts with SVIL. Interacts with HTRA3. Interacts with Myo7a. Interacts with CFAP95. Interacts with LIMCH1; independently of the integration of MYH9 into the myosin complex. Interacts with RAB3A. Interacts with ZBED4. Interacts with S100A4; this interaction increases cell motility. In terms of processing, ISGylated. Ubiquitination.

The protein resides in the cytoplasm. The protein localises to the cytoskeleton. Its subcellular location is the cell cortex. It localises to the cytoplasmic vesicle. It is found in the secretory vesicle. The protein resides in the cortical granule. In terms of biological role, cellular myosin that appears to play a role in cytokinesis, cell shape, and specialized functions such as secretion and capping. Required for cortical actin clearance prior to oocyte exocytosis. Promotes cell motility in conjunction with S100A4. During cell spreading, plays an important role in cytoskeleton reorganization, focal contact formation (in the margins but not the central part of spreading cells), and lamellipodial retraction; this function is mechanically antagonized by MYH10. In Rattus norvegicus (Rat), this protein is Myosin-9 (Myh9).